The primary structure comprises 262 residues: Tryptophan synthase alpha chain (262 aa).

Residues E52 and D63 each act as proton acceptor in the active site.

Belongs to the TrpA family. As to quaternary structure, tetramer of two alpha and two beta chains.

It catalyses the reaction (1S,2R)-1-C-(indol-3-yl)glycerol 3-phosphate + L-serine = D-glyceraldehyde 3-phosphate + L-tryptophan + H2O. It participates in amino-acid biosynthesis; L-tryptophan biosynthesis; L-tryptophan from chorismate: step 5/5. In terms of biological role, the alpha subunit is responsible for the aldol cleavage of indoleglycerol phosphate to indole and glyceraldehyde 3-phosphate. In Mycobacteroides abscessus (strain ATCC 19977 / DSM 44196 / CCUG 20993 / CIP 104536 / JCM 13569 / NCTC 13031 / TMC 1543 / L948) (Mycobacterium abscessus), this protein is Tryptophan synthase alpha chain.